The following is a 132-amino-acid chain: Small ribosomal subunit protein eS12 (132 aa).

Belongs to the eukaryotic ribosomal protein eS12 family.

It localises to the cytoplasm. The sequence is that of Small ribosomal subunit protein eS12 (rps12) from Xenopus laevis (African clawed frog).